Here is a 480-residue protein sequence, read N- to C-terminus: Glutamate--tRNA ligase (480 aa).

The short motif at 21–31 (PSPTGYLHVGG) is the 'HIGH' region element. Residues C110, C112, C137, and H139 each coordinate Zn(2+). The 'KMSKS' region signature appears at 248 to 252 (KLSKR). ATP is bound at residue K251.

The protein belongs to the class-I aminoacyl-tRNA synthetase family. Glutamate--tRNA ligase type 1 subfamily. As to quaternary structure, monomer. Requires Zn(2+) as cofactor.

It localises to the cytoplasm. The enzyme catalyses tRNA(Glu) + L-glutamate + ATP = L-glutamyl-tRNA(Glu) + AMP + diphosphate. Catalyzes the attachment of glutamate to tRNA(Glu) in a two-step reaction: glutamate is first activated by ATP to form Glu-AMP and then transferred to the acceptor end of tRNA(Glu). This Haemophilus influenzae (strain 86-028NP) protein is Glutamate--tRNA ligase.